Consider the following 143-residue polypeptide: Putative pre-16S rRNA nuclease (143 aa).

Belongs to the YqgF nuclease family.

It is found in the cytoplasm. In terms of biological role, could be a nuclease involved in processing of the 5'-end of pre-16S rRNA. The protein is Putative pre-16S rRNA nuclease of Lactococcus lactis subsp. cremoris (strain SK11).